We begin with the raw amino-acid sequence, 352 residues long: Ribosomal lysine N-methyltransferase 5 (352 aa).

S-adenosyl-L-methionine contacts are provided by residues tryptophan 107, 161–163 (GSG), aspartate 183, tryptophan 244, and leucine 274.

This sequence belongs to the class I-like SAM-binding methyltransferase superfamily. RKM5 family.

Functionally, S-adenosyl-L-methionine-dependent protein-lysine N-methyltransferase that methylates 60S ribosomal protein L1. This chain is Ribosomal lysine N-methyltransferase 5 (RKM5), found in Candida glabrata (strain ATCC 2001 / BCRC 20586 / JCM 3761 / NBRC 0622 / NRRL Y-65 / CBS 138) (Yeast).